The primary structure comprises 363 residues: MERITVNLAERSYPITIGAGLFEDSAHLSSLTAGQKVVVITNVTVAPLYADKILSLLQSLGCQASLLELPDGEQYKSLDTFNQVMSFLLEGSFARDVVVIALGGGVIGDLVGFSAACYQRGVDFIQIPTTLLSQVDSSVGGKTAVNHPLGKNMIGAFYQPKSVIIDTNCLKTLPEREFAAGIAEVIKYGIIYDAEFFTWLDEHLDALYSLDEQALTYAIARCCEIKAEVVAQDEKESGIRALLNLGHTFGHAIEAELGYGNWLHGEAVAAGTVMAARTAQLQGMIDQQQFDKIFSILSRAKLPVHTPESMTFDDFMTHMMRDKKVLSGKLRLVLPSSIGTAEVVADVPQEVIRQAIEDCRTIN.

NAD(+) contacts are provided by residues 71–76 (DGEQYK), 105–109 (GVIGD), 129–130 (TT), K142, K151, and 169–172 (CLKT). Residues E184, H247, and H264 each contribute to the Zn(2+) site.

Belongs to the sugar phosphate cyclases superfamily. Dehydroquinate synthase family. It depends on NAD(+) as a cofactor. Requires Co(2+) as cofactor. Zn(2+) serves as cofactor.

The protein resides in the cytoplasm. The enzyme catalyses 7-phospho-2-dehydro-3-deoxy-D-arabino-heptonate = 3-dehydroquinate + phosphate. Its pathway is metabolic intermediate biosynthesis; chorismate biosynthesis; chorismate from D-erythrose 4-phosphate and phosphoenolpyruvate: step 2/7. In terms of biological role, catalyzes the conversion of 3-deoxy-D-arabino-heptulosonate 7-phosphate (DAHP) to dehydroquinate (DHQ). The chain is 3-dehydroquinate synthase from Vibrio vulnificus (strain CMCP6).